Reading from the N-terminus, the 175-residue chain is Calcineurin subunit B (175 aa).

EF-hand domains follow at residues 21–56, 58–88, 90–125, and 131–166; these read AEIE…SANP, AKRI…FSGR, ETDA…MVGT, and QLQQ…TEVI. Residues D34, D36, S38, S40, E45, D66, D68, S70, D72, E77, D103, D105, D107, Y109, E114, D144, D146, D148, K150, and E155 each coordinate Ca(2+).

This sequence belongs to the calcineurin regulatory subunit family. As to quaternary structure, composed of a catalytic subunit (A) and a regulatory subunit (B).

Regulatory subunit of calcineurin, a calcium-dependent, calmodulin stimulated protein phosphatase. Confers calcium sensitivity. This chain is Calcineurin subunit B (CNB1), found in Kluyveromyces lactis (strain ATCC 8585 / CBS 2359 / DSM 70799 / NBRC 1267 / NRRL Y-1140 / WM37) (Yeast).